Consider the following 314-residue polypeptide: Malate dehydrogenase (314 aa).

9–15 (IGVGNVG) serves as a coordination point for NAD(+). The substrate site is built by R84 and R90. NAD(+) contacts are provided by residues N97 and 120–122 (ISN). 2 residues coordinate substrate: N122 and R153. H177 functions as the Proton acceptor in the catalytic mechanism.

This sequence belongs to the LDH/MDH superfamily.

It carries out the reaction (S)-malate + NAD(+) = oxaloacetate + NADH + H(+). Its function is as follows. Catalyzes the reversible oxidation of malate to oxaloacetate. In Aliarcobacter butzleri (strain RM4018) (Arcobacter butzleri), this protein is Malate dehydrogenase.